Reading from the N-terminus, the 272-residue chain is MGYFLKLYAYVNSHSLFVWVCDRSYKRSFRPMILNKIKELSRNQFSTMSHLRKDSQPSSPGDDAMDRSGLPDLQGRFELSGKNRQYPLDALEPQPSIGDIKDIKKAAKSMLDPAHKSHFHPVTPSLVFLCFIFDGLHQALLSVGVSKRSNTVVGNENEERGTPYASRFKDMPNFIALEKSSVLRHCCDLLIGIAAGSSDKICTSSLQVQRRFKAMMASIGRLSHGESADLLISCNAESAIGWISSRPWVGELMFTLLFGDFESPLHKLRKSS.

The segment at 48 to 70 (MSHLRKDSQPSSPGDDAMDRSGL) is disordered.

May act as an RNA-binding protein. The C-terminal region is highly homologous to the bornavirus nucleocapsid N protein that binds viral RNA and oligomerizes. The viral protein also possesses a nuclear import and a nuclear export signal. These 2 signals seem absent in EBLN-2 supporting an unrelated function in Human. The chain is Endogenous Bornavirus-like nucleoprotein 2 (EBLN2) from Homo sapiens (Human).